The chain runs to 939 residues: MALAIQLRQPSRAQPLPGLSHTLAGTDSCDVCNSTNLPEVEIISLLEEQLPHYKLRADTIYGYDHDDWLHTPLISPDANIDLTTEQIEETLKYFLLCAERVGQMTKTYNDIDAVTRLLEEKERDLELAARIGQSLLKKNKTLTERNELLEEQVEHIREEVSQLRHELSMKDELLQFYTSAAEESEPESVCSTPLKRNESSSSVQNYFHLDSLQKKLKDLEEENVVLRSEACQLKTETITYEEKEQQLVNDCVKELRDANVQIASISEELAKKTEDAARQQEEITHLLSQIVDLQKKAKSCAVENEELVQHLGAAKDAQRQLTAELRELEDKYAECMEMLHEAQEELKNLRNKTMPTSRRYHSLGLFPMDSLAAEIEGTMRKELQLEELESPDITHQKRVFETVRNVNQVVKQRSLTPSPMNIPGSNQSSAMNSLLSSCVSTPRSSFYGSDVSNVVLDNKTNSILLETEAADLGNEDHNKKPGTPGTPGSHDLETALRRLSLRRENYLSERRFFEEEQERKLRELAEKGELHSGSLTPTESIMSLGTHSRFSEFTGFSGMSFSSRSYLPEKLQIVKPLEGSATLHHWQQLAQPHLGGILDPRPGVVTKGFRTLDVDLDEVYCLNDFEEDDTGDHISLAGLATSTPIQHPETSAHHPGKCMSQTNSTFTFTTCRILHPSDELTRVTPSLNSAPAPACSSTSHLKSTPVATPCTPRRLSLAESFTNVRESTTTMSTSLGLVWLLKERGISAAVYDPQSWDRAGRGSLLHSYTPRMAVIPSTPPNSPMQTPSASPPSFEFKCTSPPYNNFLASKPASSILREVREKRPVRSSESQTDVSVSNLNLVDKVRRFGVARVVNSGRARIPTLTEEQGPLLCGPTGPAQALVPGGLVPEGLPLGCPSGIRRNRSFPTMVGSSVQMRAPVILTSGILMGAKLPKQTSLR.

The 308-residue stretch at 46–353 folds into the HAP1 N-terminal domain; it reads LEEQLPHYKL…EELKNLRNKT (308 aa). A coiled-coil region spans residues 106-354; that stretch reads KTYNDIDAVT…ELKNLRNKTM (249 aa). Residues 359-509 are interaction with HGS; that stretch reads RYHSLGLFPM…SLRRENYLSE (151 aa). O-linked (GlcNAc) serine glycosylation is present at Ser444. The segment at 472–492 is disordered; that stretch reads LGNEDHNKKPGTPGTPGSHDL. Residues 490 to 524 adopt a coiled-coil conformation; the sequence is HDLETALRRLSLRRENYLSERRFFEEEQERKLREL. Residue Ser534 is modified to Phosphoserine. Residues 655–669 form an interaction with OGT region; the sequence is PGKCMSQTNSTFTFT. O-linked (GlcNAc) serine glycans are attached at residues Ser677 and Ser716. A phosphoserine mark is found at Ser716 and Ser905.

The protein belongs to the milton family. As to quaternary structure, interacts with RHOT1 and RHOT2. Found in a complex with KIF5B, OGT, RHOT1 and RHOT2. Interacts with HGS. Interacts with GABRA1. Interacts with KIF5C. Interacts with OGT; stable interaction is not required for glycosylation of this protein by OGT. Isoform 1 interacts with OGT. Post-translationally, O-glycosylated. Glycosylated by OGT; glycosylation in response to increased extracellular glucose levels is required for and leads to regulation of mitochondrial motility by OGT. As to expression, widely expressed with the greatest expression in brain, liver and kidney. Detected throughout the CNS, including the cortex, hippocamps, thalamus and various subcortical nuclei of the forebrain and midbrain, the granule of Purkinje layers of the cerebellum and the gray matter of the spinal cord. High level detected in lower moter neurons (at protein level).

Its subcellular location is the cytoplasm. The protein localises to the nucleus. It localises to the mitochondrion. The protein resides in the early endosome. It is found in the endosome. Its subcellular location is the mitochondrion membrane. The protein localises to the cell cortex. Functionally, involved in the regulation of endosome-to-lysosome trafficking, including endocytic trafficking of EGF-EGFR complexes and GABA-A receptors. Involved in mitochondrial motility. When O-glycosylated, abolishes mitochondrial motility. Crucial for recruiting OGT to the mitochondrial surface of neuronal processes. TRAK1 and RHOT form an essential protein complex that links KIF5 to mitochondria for light chain-independent, anterograde transport of mitochondria. The chain is Trafficking kinesin-binding protein 1 (Trak1) from Mus musculus (Mouse).